Reading from the N-terminus, the 219-residue chain is MITLLHIDTSARRTDNDVKEYNSISKSLAAHFMDKWITLNSKDKVIYRDLGLNPPDFISQDWIAAVFTPDEKQSEEQKSLLTLSDTLIDEVDQADIIVISSPMYNYGMPAVLKAWFDQVVRINKTFTFDLARGDFPIEPIMSGKKLILISSSGEFGFEIGGIREKMNYLAPHVETASKYLGVEEFYEIKSEYQEFADARHEESLSNAYRGVEELVKQLV.

FMN contacts are provided by residues S10 and 23–25 (SIS).

The protein belongs to the azoreductase type 1 family. As to quaternary structure, homodimer. It depends on FMN as a cofactor.

The enzyme catalyses 2 a quinone + NADH + H(+) = 2 a 1,4-benzosemiquinone + NAD(+). It carries out the reaction N,N-dimethyl-1,4-phenylenediamine + anthranilate + 2 NAD(+) = 2-(4-dimethylaminophenyl)diazenylbenzoate + 2 NADH + 2 H(+). Its function is as follows. Quinone reductase that provides resistance to thiol-specific stress caused by electrophilic quinones. Functionally, also exhibits azoreductase activity. Catalyzes the reductive cleavage of the azo bond in aromatic azo compounds to the corresponding amines. This chain is FMN-dependent NADH:quinone oxidoreductase 2, found in Colwellia psychrerythraea (strain 34H / ATCC BAA-681) (Vibrio psychroerythus).